The primary structure comprises 437 residues: Cytochrome c biogenesis protein Ccs1 (437 aa).

3 helical membrane passes run 23–43, 82–102, and 168–188; these read LQFSIILLLVIASFSVIGTII, TWWFLTLLFIFSLSLLVCSLS, and LAPIFVHASIILLLIGSVLGL.

It belongs to the Ccs1/CcsB family. In terms of assembly, may interact with CcsA.

The protein localises to the plastid. It is found in the chloroplast thylakoid membrane. Functionally, required during biogenesis of c-type cytochromes (cytochrome c6 and cytochrome f) at the step of heme attachment. In Porphyra purpurea (Red seaweed), this protein is Cytochrome c biogenesis protein Ccs1.